Consider the following 128-residue polypeptide: Ig kappa chain V-V region T1 (128 aa).

The N-terminal stretch at 1–20 (MRTPAQFLGILLLWFPGIKC) is a signal peptide. Residues 21–43 (DIKMTQSPSSMYASLGERVTISC) form a framework-1 region. A disulfide bridge links cysteine 43 with cysteine 108. Residues 44 to 54 (KASQDINSYLT) are complementarity-determining-1. Residues 55 to 69 (WFQQKPGKSPKTLLY) are framework-2. The interval 70-76 (RANRLVD) is complementarity-determining-2. The interval 77–108 (GVPSRFSGSGSGQDFSLTISSLEYEDMGIYYC) is framework-3. Residues 109-117 (LQYDEFPLT) are complementarity-determining-3. Residues 118–127 (FGAGTKLELK) are framework-4.

The sequence is that of Ig kappa chain V-V region T1 from Mus musculus (Mouse).